A 476-amino-acid chain; its full sequence is Arginine biosynthesis bifunctional protein ArgJ, mitochondrial (476 aa).

6 residues coordinate substrate: T193, K219, T237, E337, N471, and S476. Residue T237 is the Nucleophile of the active site.

Belongs to the ArgJ family. As to quaternary structure, heterodimer of an alpha and a beta chain. In terms of processing, the alpha and beta chains are autoproteolytically processed from a single precursor protein within the mitochondrion.

It localises to the mitochondrion matrix. It carries out the reaction N(2)-acetyl-L-ornithine + L-glutamate = N-acetyl-L-glutamate + L-ornithine. The enzyme catalyses L-glutamate + acetyl-CoA = N-acetyl-L-glutamate + CoA + H(+). It participates in amino-acid biosynthesis; L-arginine biosynthesis; L-ornithine and N-acetyl-L-glutamate from L-glutamate and N(2)-acetyl-L-ornithine (cyclic): step 1/1. It functions in the pathway amino-acid biosynthesis; L-arginine biosynthesis; N(2)-acetyl-L-ornithine from L-glutamate: step 1/4. Its function is as follows. Catalyzes two activities which are involved in the cyclic version of arginine biosynthesis: the synthesis of acetylglutamate from glutamate and acetyl-CoA, and of ornithine by transacetylation between acetylornithine and glutamate. The sequence is that of Arginine biosynthesis bifunctional protein ArgJ, mitochondrial from Cryptococcus neoformans var. neoformans serotype D (strain B-3501A) (Filobasidiella neoformans).